The following is a 144-amino-acid chain: HMG1/2-like protein (144 aa).

Disordered stretches follow at residues 1-42 (MKGG…PPSA) and 85-144 (PFIS…EDDD). 2 stretches are compositionally biased toward basic and acidic residues: residues 8-35 (AKSDNKLAVKKQAADTKKTKKAVKDPNK) and 89-99 (KAEKRKQEYEK). The segment at residues 36–105 (PKRPPSAFFV…EYEKNLQAYN (70 aa)) is a DNA-binding region (HMG box). A compositionally biased stretch (acidic residues) spans 126 to 144 (NDDDEDQDGSGEDDSEDDD).

This sequence belongs to the HMGB family. Expressed at higher levels in dark-grown tissues, such as roots; and at lower levels in light-grown tissues, such as cotyledons and stems.

It localises to the nucleus. The chain is HMG1/2-like protein from Ipomoea nil (Japanese morning glory).